Reading from the N-terminus, the 57-residue chain is Large ribosomal subunit protein bL32c (57 aa).

The protein belongs to the bacterial ribosomal protein bL32 family.

The protein localises to the plastid. It is found in the chloroplast. The chain is Large ribosomal subunit protein bL32c from Phalaenopsis aphrodite subsp. formosana (Moth orchid).